Reading from the N-terminus, the 583-residue chain is NEDD4-binding protein 2-like 2 (583 aa).

Positions 162 to 197 (NSEKSEIDNELFQFYKEIEELEKEKDGFENSCKESE) form a coiled coil. Residues 549 to 575 (EPSHKSTQRPPPPQGRQRWGGSLGSHN) are disordered.

The sequence is that of NEDD4-binding protein 2-like 2 (N4BP2L2) from Homo sapiens (Human).